We begin with the raw amino-acid sequence, 345 residues long: Platelet-derived growth factor C (345 aa).

The N-terminal stretch at Met-1–Ala-22 is a signal peptide. N-linked (GlcNAc...) asparagine glycans are attached at residues Asn-25 and Asn-55. The CUB domain occupies His-46 to Val-163. 4 cysteine pairs are disulfide-bonded: Cys-104–Cys-124, Cys-250–Cys-294, Cys-280–Cys-335, and Cys-287–Cys-337.

The protein belongs to the PDGF/VEGF growth factor family. Homodimer; disulfide-linked. Interacts with PDGFRA homodimers, and with heterodimers formed by PDGFRA and PDGFRB. Interacts (via CUB domain) with PLAT (via kringle domain). In terms of processing, proteolytic removal of the N-terminal CUB domain releasing the core domain is necessary for unmasking the receptor-binding epitopes of the core domain. Cleavage after basic residues in the hinge region (region connecting the CUB and growth factor domains) gives rise to the receptor-binding form. Cleaved by PLAT and PLG. Sumoylated with SUMO1. Post-translationally, N-glycosylated. As to expression, expressed in the fallopian tube, vascular smooth muscle cells in kidney, breast and colon and in visceral smooth muscle of the gastrointestinal tract. Highly expressed in retinal pigment epithelia. Expressed in medulloblastoma. In the kidney, constitutively expressed in parietal epithelial cells of Bowman's capsule, tubular epithelial cells and in arterial endothelial cells (at protein level). Highly expressed in the platelets, prostate, testis and uterus. Higher expression is observed in uterine leiomyomata. Weaker expression in the spleen, thymus, heart, pancreas, liver, ovary cells and small intestine, and negligible expression in the colon and peripheral blood leukocytes.

It localises to the cytoplasm. It is found in the cytosol. The protein localises to the secreted. Its subcellular location is the nucleus. The protein resides in the cytoplasmic granule. It localises to the cell membrane. Its function is as follows. Growth factor that plays an essential role in the regulation of embryonic development, cell proliferation, cell migration, survival and chemotaxis. Potent mitogen and chemoattractant for cells of mesenchymal origin. Required for normal skeleton formation during embryonic development, especially for normal development of the craniofacial skeleton and for normal development of the palate. Required for normal skin morphogenesis during embryonic development. Plays an important role in wound healing, where it appears to be involved in three stages: inflammation, proliferation and remodeling. Plays an important role in angiogenesis and blood vessel development. Involved in fibrotic processes, in which transformation of interstitial fibroblasts into myofibroblasts plus collagen deposition occurs. The CUB domain has mitogenic activity in coronary artery smooth muscle cells, suggesting a role beyond the maintenance of the latency of the PDGF domain. In the nucleus, PDGFC seems to have additional function. In Homo sapiens (Human), this protein is Platelet-derived growth factor C (PDGFC).